A 76-amino-acid chain; its full sequence is Centromere protein W (76 aa).

It belongs to the CENP-W/WIP1 family. As to quaternary structure, heterodimer with CENPT; this dimer coassembles with CENPS-CENPX heterodimers at centromeres to form the tetrameric CENP-T-W-S-X complex, which is a subcomplex of the large constitutive centromere-associated network (CCAN, also known as the interphase centromere complex or ICEN). Interacts with NPM1.

Its subcellular location is the nucleus. The protein localises to the chromosome. The protein resides in the centromere. It is found in the kinetochore. Its function is as follows. Component of the CENPA-NAC (nucleosome-associated) complex, a complex that plays a central role in assembly of kinetochore proteins, mitotic progression and chromosome segregation. The CENPA-NAC complex recruits the CENPA-CAD (nucleosome distal) complex and may be involved in incorporation of newly synthesized CENPA into centromeres. Part of a nucleosome-associated complex that binds specifically to histone H3-containing nucleosomes at the centromere, as opposed to nucleosomes containing CENPA. Component of the heterotetrameric CENP-T-W-S-X complex that binds and supercoils DNA, and plays an important role in kinetochore assembly. CENPW has a fundamental role in kinetochore assembly and function. It is one of the inner kinetochore proteins, with most further proteins binding downstream. Required for normal chromosome organization and normal progress through mitosis. In Gallus gallus (Chicken), this protein is Centromere protein W (CENPW).